We begin with the raw amino-acid sequence, 290 residues long: Small ribosomal subunit biogenesis GTPase RsgA (290 aa).

The region spanning 62–219 (RTCLKRPAVA…VADTPGFSRL (158 aa)) is the CP-type G domain. Residues 111–114 (NKAD) and 161–169 (GPSGVGKSS) contribute to the GTP site. Zn(2+) is bound by residues Cys243, Cys248, His250, and Cys256.

It belongs to the TRAFAC class YlqF/YawG GTPase family. RsgA subfamily. As to quaternary structure, monomer. Associates with 30S ribosomal subunit, binds 16S rRNA. Zn(2+) serves as cofactor.

Its subcellular location is the cytoplasm. Its function is as follows. One of several proteins that assist in the late maturation steps of the functional core of the 30S ribosomal subunit. Helps release RbfA from mature subunits. May play a role in the assembly of ribosomal proteins into the subunit. Circularly permuted GTPase that catalyzes slow GTP hydrolysis, GTPase activity is stimulated by the 30S ribosomal subunit. This is Small ribosomal subunit biogenesis GTPase RsgA from Moorella thermoacetica (strain ATCC 39073 / JCM 9320).